Reading from the N-terminus, the 450-residue chain is MAQFFKPQKRNKSVSKTLKGQVSALDHQARAVVRAAVKGQSTRFIMGALPGEVIEYKTAGKHSGHLERILEPSSDRREVPCEYYASCGGCDFQHIDEQKQLAHKRQVVEELFQKFGVFNPQTSSLPWQEPLVSEPMRYRRRVRLATRWLGKEQKLLIGFREAQSHHIVPIEDCLVADEILLHCVNTLYPLLNTSTVASKLGHIEAINTNTPVILLRITEALPGDAMQALQEWQTVNKTNIWLQSENDLQPLAGAAMPFDTSIDGDKLYFQPGDFLQVNGGINQRMVQQAMDWLKPEKTQRVYDFFAGIGNFSLPLARRAQSVLAVEGVYRMAEQTRINAESNGMDNLSSLSADLNEITASDLGKPADLWCLDPARPGAEGVVKLLHKLKPEHRPQRILYVSCAPDTLARDIAGMLTESKGCNYRIIGLSTVDMFPQTHHIETMVCLERAS.

[4Fe-4S] cluster-binding residues include cysteine 81, cysteine 87, cysteine 90, and cysteine 173. 6 residues coordinate S-adenosyl-L-methionine: glutamine 276, phenylalanine 305, asparagine 310, glutamate 326, aspartate 353, and aspartate 372. The active-site Nucleophile is cysteine 402.

The protein belongs to the class I-like SAM-binding methyltransferase superfamily. RNA M5U methyltransferase family. RlmD subfamily.

It carries out the reaction uridine(1939) in 23S rRNA + S-adenosyl-L-methionine = 5-methyluridine(1939) in 23S rRNA + S-adenosyl-L-homocysteine + H(+). In terms of biological role, catalyzes the formation of 5-methyl-uridine at position 1939 (m5U1939) in 23S rRNA. In Idiomarina loihiensis (strain ATCC BAA-735 / DSM 15497 / L2-TR), this protein is 23S rRNA (uracil(1939)-C(5))-methyltransferase RlmD.